Here is a 178-residue protein sequence, read N- to C-terminus: Vegetative protein (178 aa).

2 disordered regions span residues 67-102 (AGRR…AAAG) and 138-158 (NRRP…DIKL). Over residues 76–90 (PAARSAVTAAPAAVG) the composition is skewed to low complexity.

This chain is Vegetative protein (vegA), found in Myxococcus xanthus.